Consider the following 81-residue polypeptide: uncharacterized protein (81 aa).

To yeast YDL157C.

The protein localises to the mitochondrion. This is an uncharacterized protein from Schizosaccharomyces pombe (strain 972 / ATCC 24843) (Fission yeast).